We begin with the raw amino-acid sequence, 243 residues long: uncharacterized protein (243 aa).

The segment at 157-181 is disordered; it reads SEETKEQPDATTSEKSRSPECPKTT.

This is an uncharacterized protein from Rattus norvegicus (Rat).